The chain runs to 284 residues: Putative transcription factor kapC (284 aa).

The segment covering 1 to 10 (MQPTLAPAPH) has biased composition (pro residues). Residues 1–121 (MQPTLAPAPH…NRAAQRAFRQ (121 aa)) form a disordered region. A compositionally biased stretch (low complexity) spans 26-40 (HDQLLAAHQHLSHPQ). The span at 41 to 54 (QPRPQPPAAQPPHM) shows a compositional bias: pro residues. The segment covering 57–67 (NTTSPRDQNNI) has biased composition (polar residues). The bZIP domain maps to 102–165 (PLSTSKRAAQ…EYIINLQSRL (64 aa)). A basic motif region spans residues 103-126 (LSTSKRAAQNRAAQRAFRQRKESY). Over residues 108–118 (RAAQNRAAQRA) the composition is skewed to low complexity. The leucine-zipper stretch occupies residues 130-161 (LEEQVKEFDTMSEAFKALQAENYQLREYIINL). The tract at residues 174 to 284 (ELPGNIDLSQ…QAPHGLPMVS (111 aa)) is disordered. The segment covering 193 to 222 (PGAGPATTSSSAPAPPSGAQQAQPPQGAAS) has biased composition (low complexity).

This sequence belongs to the bZIP family.

The protein localises to the nucleus. Functionally, putative transcription factor. This chain is Putative transcription factor kapC (kapC), found in Aspergillus oryzae (strain ATCC 42149 / RIB 40) (Yellow koji mold).